We begin with the raw amino-acid sequence, 326 residues long: GDP-mannose transporter (326 aa).

At 1–4 (MEKS) the chain is on the cytoplasmic side. A helical transmembrane segment spans residues 5-25 (ITNSPVLSILSYCAASILMTV). Topologically, residues 26-35 (TNKYVLSGTS) are lumenal. Residues 36–56 (FNLNLALLAVQSIVCLTAISI) form a helical membrane-spanning segment. Residues 57 to 74 (GKSFGLCKFRSFNADEAK) are Cytoplasmic-facing. The helical transmembrane segment at 75 to 97 (KWFPIALLLVVMIYTSSKALQFL) threads the bilayer. The Lumenal portion of the chain corresponds to 98–100 (SIP). The chain crosses the membrane as a helical span at residues 101–123 (VYTIFKNLTIILIAYGEVLWFGG). The Cytoplasmic segment spans residues 124–129 (SVTSMA). A helical transmembrane segment spans residues 130-152 (LASFVLMVLSSVIAAWSDISGAI). At 153–163 (AVSGSATTTVT) the chain is on the lumenal side. A helical transmembrane segment spans residues 164–184 (ALNIGYFWMMSNCFASAAFVL). Residues 185–208 (YMRKRIKLTNFGDFDTTFYNNLLS) are Cytoplasmic-facing. A helical membrane pass occupies residues 209-229 (IPVLLIASLLFEDWSPANLAV). Residues 230 to 237 (NFPPESRN) are Lumenal-facing. The helical transmembrane segment at 238–258 (LIFFSMVVSGLMSIGISYCSA) threads the bilayer. Residues 259–268 (WCVRVTSSTT) are Cytoplasmic-facing. Residues 269 to 289 (YSMVGALNKLPLALSGIVFFG) traverse the membrane as a helical segment. Over 290-291 (TP) the chain is Lumenal. Residues 292-312 (ATFSSVSAIFVGFVAGIVYAV) form a helical membrane-spanning segment. The Cytoplasmic segment spans residues 313-326 (AQIQKKKAEAALPK).

Belongs to the TPT transporter family. SLC35D subfamily. As to quaternary structure, homooligomer.

Its subcellular location is the golgi apparatus membrane. The protein resides in the cytoplasmic vesicle membrane. The protein localises to the endoplasmic reticulum membrane. Its function is as follows. Involved in the import of GDP-mannose from the cytoplasm into the Golgi lumen. The chain is GDP-mannose transporter (VRG4) from Yarrowia lipolytica (strain CLIB 122 / E 150) (Yeast).